The chain runs to 423 residues: Levansucrase (423 aa).

Residues Trp47, Asp48, Ser119, Arg193, and Asp194 each coordinate sucrose. The Nucleophile role is filled by Asp48. Glu278 functions as the Proton donor/acceptor in the catalytic mechanism.

Belongs to the glycosyl hydrolase 68 family.

Its subcellular location is the secreted. It carries out the reaction [6)-beta-D-fructofuranosyl-(2-&gt;](n) alpha-D-glucopyranoside + sucrose = [6)-beta-D-fructofuranosyl-(2-&gt;](n+1) alpha-D-glucopyranoside + D-glucose. Its function is as follows. Catalyzes the synthesis of levan, a fructose polymer, by transferring the fructosyl moiety from sucrose to a growing acceptor molecule. The sequence is that of Levansucrase from Zymomonas mobilis subsp. mobilis (strain ATCC 10988 / DSM 424 / LMG 404 / NCIMB 8938 / NRRL B-806 / ZM1).